The sequence spans 1551 residues: Pentafunctional AROM polypeptide (1551 aa).

The tract at residues 1-379 (MSIEKVPILG…YQLKAHQVSK (379 aa)) is 3-dehydroquinate synthase. NAD(+) is bound by residues 42–44 (DTN), 80–83 (ENNK), 111–113 (GGV), and D116. Position 127 (R127) interacts with 7-phospho-2-dehydro-3-deoxy-D-arabino-heptonate. 136–137 (TT) is an NAD(+) binding site. 2 residues coordinate 7-phospho-2-dehydro-3-deoxy-D-arabino-heptonate: D143 and K149. Residue K158 coordinates NAD(+). A 7-phospho-2-dehydro-3-deoxy-D-arabino-heptonate-binding site is contributed by N159. NAD(+) is bound by residues 176–179 (FLET) and N187. Residue E191 coordinates Zn(2+). 7-phospho-2-dehydro-3-deoxy-D-arabino-heptonate-binding positions include 191-194 (EVVK) and K243. E253 (proton acceptor; for 3-dehydroquinate synthase activity) is an active-site residue. 7-phospho-2-dehydro-3-deoxy-D-arabino-heptonate is bound by residues 257–261 (RNLLN) and H264. H264 is a Zn(2+) binding site. Residue H268 is the Proton acceptor; for 3-dehydroquinate synthase activity of the active site. Residues H280 and K351 each contribute to the 7-phospho-2-dehydro-3-deoxy-D-arabino-heptonate site. H280 provides a ligand contact to Zn(2+). An EPSP synthase region spans residues 392–838 (VHPFTNPPKE…WDILHSKFKI (447 aa)). Residues 858 to 1048 (DKSIIVIGMR…VPAGRSAAVV (191 aa)) are shikimate kinase. 865 to 872 (GMRGTGKS) serves as a coordination point for ATP. The segment at 1049-1258 (LTSPDLNEVV…NDEEFLTIGE (210 aa)) is 3-dehydroquinase. The Schiff-base intermediate with substrate; for 3-dehydroquinate dehydratase activity role is filled by R1194. A shikimate dehydrogenase region spans residues 1271 to 1551 (AKKFWVIGSP…EIIHRAVVEE (281 aa)).

In the N-terminal section; belongs to the sugar phosphate cyclases superfamily. Dehydroquinate synthase family. It in the 2nd section; belongs to the EPSP synthase family. The protein in the 3rd section; belongs to the shikimate kinase family. This sequence in the 4th section; belongs to the type-I 3-dehydroquinase family. In the C-terminal section; belongs to the shikimate dehydrogenase family. In terms of assembly, homodimer. Zn(2+) is required as a cofactor.

The protein localises to the cytoplasm. It catalyses the reaction 7-phospho-2-dehydro-3-deoxy-D-arabino-heptonate = 3-dehydroquinate + phosphate. The catalysed reaction is 3-dehydroquinate = 3-dehydroshikimate + H2O. The enzyme catalyses shikimate + NADP(+) = 3-dehydroshikimate + NADPH + H(+). It carries out the reaction shikimate + ATP = 3-phosphoshikimate + ADP + H(+). It catalyses the reaction 3-phosphoshikimate + phosphoenolpyruvate = 5-O-(1-carboxyvinyl)-3-phosphoshikimate + phosphate. It participates in metabolic intermediate biosynthesis; chorismate biosynthesis; chorismate from D-erythrose 4-phosphate and phosphoenolpyruvate: step 2/7. It functions in the pathway metabolic intermediate biosynthesis; chorismate biosynthesis; chorismate from D-erythrose 4-phosphate and phosphoenolpyruvate: step 3/7. The protein operates within metabolic intermediate biosynthesis; chorismate biosynthesis; chorismate from D-erythrose 4-phosphate and phosphoenolpyruvate: step 4/7. Its pathway is metabolic intermediate biosynthesis; chorismate biosynthesis; chorismate from D-erythrose 4-phosphate and phosphoenolpyruvate: step 5/7. It participates in metabolic intermediate biosynthesis; chorismate biosynthesis; chorismate from D-erythrose 4-phosphate and phosphoenolpyruvate: step 6/7. Functionally, the AROM polypeptide catalyzes 5 consecutive enzymatic reactions in prechorismate polyaromatic amino acid biosynthesis. The polypeptide is Pentafunctional AROM polypeptide (Candida albicans (strain SC5314 / ATCC MYA-2876) (Yeast)).